The following is a 764-amino-acid chain: 1,4-alpha-glucan branching enzyme GlgB (764 aa).

The active-site Nucleophile is the Asp434. Residue Glu487 is the Proton donor of the active site.

This sequence belongs to the glycosyl hydrolase 13 family. GlgB subfamily. In terms of assembly, monomer.

The enzyme catalyses Transfers a segment of a (1-&gt;4)-alpha-D-glucan chain to a primary hydroxy group in a similar glucan chain.. It participates in glycan biosynthesis; glycogen biosynthesis. Functionally, catalyzes the formation of the alpha-1,6-glucosidic linkages in glycogen by scission of a 1,4-alpha-linked oligosaccharide from growing alpha-1,4-glucan chains and the subsequent attachment of the oligosaccharide to the alpha-1,6 position. This Trichormus variabilis (strain ATCC 29413 / PCC 7937) (Anabaena variabilis) protein is 1,4-alpha-glucan branching enzyme GlgB.